The sequence spans 984 residues: MKKIRQPIIAVLGHVDHGKCLLPEEKVVLPEIGLVTLRELFELANEVVVKDEEKEVRKLGKMLTGVDERGNVKLLNALYVWRVAHKGEMIRVKVNGWYSVTVTPEHPFLTNRGWVKAGELKEGDYIAIPRRVYGNEDLMKFSKIAKELGIKGDEKEFYLAGASLDIPIKVLFLAPSKLVSAFLRGYFDAKGVVRENYIEVPLFEDLPLLLLRFGIVSRIEKSTLKISGKRNLELFRKHVGFTDSEKAKALDELISKAKESERYPILEELRRLGLLFGFTRNELRIEENPTYEVLMEILERIERGSPNLAEKIAVLEGRIKEENYLRILEEEGLIENGKLTELGKELLEVWRNREFDSKDVDYVRNIVENLVFLPVEKVERIEYEGYVYDVTTETHNFVANGILVHNTTLLDRIRKTNVAAKEAGGITQHIGATEVPIDVVKEIAGPLIKLWKAEIKLPGLLFIDTPGHEAFTSLRARGGSLADLAVLVVDINEGFQPQTIESIEILRRYKTPFVVAANKIDRIKGWVIQEDEPFLLNSKRQDQRAIQELETKLWELIGKFYEFGFQANRFDRVQNFTRELAIVPISAKYGIGIAELLVLIAGLSQKYLEERLKIEVEGPARGTILEVREEPGLGHTIDVIIYEGTLHKDDTIVVGGKDKAIVTKVRALLKPKPLDEIRDPRFRFDYVDEVTAAAGVKIAAPGLEEALAGSPVIAAPTPEAVEKAKEEIMRQIQSVVISTDKMGVIIKADTLGSLEALSKELQEKGIPIRKADVGNISKTDVMEALSVREEDPKYGVIIGFNVKVNEDAQEIAKAKGVPIFVGNIIYKLIEDYEAWVKEEEEKKKRELLAKVTFPGVIRLYPDERYVFRRSNPAIVGIEVIEGRIKPGVTLIKQNGQKVGTIKSIKSRDEFLQEAKKGQAVAVAIEGAIVGRHIHPGETLYVDISRDDAITLLKYLRDVLEDSDIKALKIIAQIKAKEDPFWRAI.

Positions 94 to 215 constitute a DOD-type homing endonuclease domain; sequence VNGWYSVTVT…LPLLLLRFGI (122 aa). Positions 391 to 608 constitute a tr-type G domain; sequence TTETHNFVAN…LIAGLSQKYL (218 aa). Residues 464-468 and 518-521 contribute to the GTP site; these read DTPGH and NKID.

The protein belongs to the TRAFAC class translation factor GTPase superfamily. Classic translation factor GTPase family. IF-2 subfamily. In terms of processing, this protein undergoes a protein self splicing that involves a post-translational excision of the intervening region (intein) followed by peptide ligation.

Its function is as follows. Function in general translation initiation by promoting the binding of the formylmethionine-tRNA to ribosomes. Seems to function along with eIF-2. The chain is Probable translation initiation factor IF-2 (infB) from Pyrococcus furiosus (strain ATCC 43587 / DSM 3638 / JCM 8422 / Vc1).